A 293-amino-acid chain; its full sequence is Probable tRNA-splicing endonuclease subunit Sen2 (293 aa).

Residues tyrosine 157, histidine 165, and lysine 204 contribute to the active site. A helical transmembrane segment spans residues 267-287 (VVFNHWGVILGFTVLSGLLVY).

This sequence belongs to the tRNA-intron endonuclease family. As to quaternary structure, tRNA splicing endonuclease is a heterotetramer composed of SEN2, SEN15, SEN34/LENG5 and SEN54.

The protein resides in the nucleus. It localises to the membrane. It catalyses the reaction pretRNA = a 3'-half-tRNA molecule with a 5'-OH end + a 5'-half-tRNA molecule with a 2',3'-cyclic phosphate end + an intron with a 2',3'-cyclic phosphate and a 5'-hydroxyl terminus.. Its function is as follows. Constitutes one of the two catalytic subunit of the tRNA-splicing endonuclease complex, a complex responsible for identification and cleavage of the splice sites in pre-tRNA. It cleaves pre-tRNA at the 5'- and 3'-splice sites to release the intron. The products are an intron and two tRNA half-molecules bearing 2',3'-cyclic phosphate and 5'-OH termini. There are no conserved sequences at the splice sites, but the intron is invariably located at the same site in the gene, placing the splice sites an invariant distance from the constant structural features of the tRNA body. Probably carries the active site for 5'-splice site cleavage. The polypeptide is Probable tRNA-splicing endonuclease subunit Sen2 (Oryza sativa subsp. japonica (Rice)).